The following is a 279-amino-acid chain: Phosphatidylglycerol--prolipoprotein diacylglyceryl transferase (279 aa).

7 consecutive transmembrane segments (helical) span residues 22 to 42 (SAHW…WSSI), 58 to 78 (ILYF…VIFY), 89 to 109 (FIFK…GSII), 128 to 148 (FLVP…FING), 195 to 215 (ISQL…LNIF), 223 to 243 (GYMS…AEFF), and 256 to 276 (YISL…ILII). Arginine 141 is a binding site for a 1,2-diacyl-sn-glycero-3-phospho-(1'-sn-glycerol).

The protein belongs to the Lgt family.

It is found in the cell membrane. It carries out the reaction L-cysteinyl-[prolipoprotein] + a 1,2-diacyl-sn-glycero-3-phospho-(1'-sn-glycerol) = an S-1,2-diacyl-sn-glyceryl-L-cysteinyl-[prolipoprotein] + sn-glycerol 1-phosphate + H(+). It participates in protein modification; lipoprotein biosynthesis (diacylglyceryl transfer). In terms of biological role, catalyzes the transfer of the diacylglyceryl group from phosphatidylglycerol to the sulfhydryl group of the N-terminal cysteine of a prolipoprotein, the first step in the formation of mature lipoproteins. The chain is Phosphatidylglycerol--prolipoprotein diacylglyceryl transferase from Wigglesworthia glossinidia brevipalpis.